A 930-amino-acid polypeptide reads, in one-letter code: Endoplasmic reticulum aminopeptidase 1 (930 aa).

Over methionine 1–proline 2 the chain is Cytoplasmic. A helical; Signal-anchor for type II membrane protein membrane pass occupies residues serine 3–serine 23. At aspartate 24 to leucine 930 the chain is on the lumenal side. 2 N-linked (GlcNAc...) asparagine glycosylation sites follow: asparagine 59 and asparagine 143. Substrate is bound by residues glutamate 172 and glycine 306–asparagine 310. Position 342 (histidine 342) interacts with Zn(2+). Glutamate 343 functions as the Proton acceptor in the catalytic mechanism. Zn(2+) is bound by residues histidine 346 and glutamate 365. An intrachain disulfide couples cysteine 393 to cysteine 432. Residues asparagine 403 and asparagine 655 are each glycosylated (N-linked (GlcNAc...) asparagine). Cysteine 725 and cysteine 732 are joined by a disulfide. N-linked (GlcNAc...) asparagine glycosylation is found at asparagine 749 and asparagine 890.

The protein belongs to the peptidase M1 family. As to quaternary structure, monomer. May also exist as a heterodimer; with ERAP2. Interacts with RBMX. Zn(2+) is required as a cofactor. In terms of processing, N-glycosylated. In terms of tissue distribution, ubiquitous.

The protein localises to the endoplasmic reticulum membrane. Functionally, aminopeptidase that plays a central role in peptide trimming, a step required for the generation of most HLA class I-binding peptides. Peptide trimming is essential to customize longer precursor peptides to fit them to the correct length required for presentation on MHC class I molecules. Strongly prefers substrates 9-16 residues long. Rapidly degrades 13-mer to a 9-mer and then stops. Preferentially hydrolyzes the residue Leu and peptides with a hydrophobic C-terminus, while it has weak activity toward peptides with charged C-terminus. May play a role in the inactivation of peptide hormones. May be involved in the regulation of blood pressure through the inactivation of angiotensin II and/or the generation of bradykinin in the kidney. The polypeptide is Endoplasmic reticulum aminopeptidase 1 (Erap1) (Rattus norvegicus (Rat)).